A 380-amino-acid polypeptide reads, in one-letter code: Pectinesterase QRT1 (380 aa).

An N-terminal signal peptide occupies residues Met-1–Ala-26. Asn-74 and Asn-137 each carry an N-linked (GlcNAc...) asparagine glycan. Residues Thr-164 and Gln-198 each coordinate substrate. The active-site Proton donor is Asp-221. Asn-227 carries N-linked (GlcNAc...) asparagine glycosylation. Cysteines 235 and 255 form a disulfide. Asp-242 serves as the catalytic Nucleophile. Substrate contacts are provided by Arg-298 and Trp-300. Asn-302 is a glycosylation site (N-linked (GlcNAc...) asparagine).

Belongs to the pectinesterase family. In terms of tissue distribution, expressed in flower buds, siliques, developing guard cells, floral nectares, at the stigmatic surface, in the hypocotyl-root transition zone and the area of lateral root emergence. Not expressed in mature leaves.

The protein localises to the secreted. Its subcellular location is the cell wall. The enzyme catalyses [(1-&gt;4)-alpha-D-galacturonosyl methyl ester](n) + n H2O = [(1-&gt;4)-alpha-D-galacturonosyl](n) + n methanol + n H(+). It participates in glycan metabolism; pectin degradation; 2-dehydro-3-deoxy-D-gluconate from pectin: step 1/5. Functionally, pectinesterase required for cell type-specific pectin degradation to separate microspores. The sequence is that of Pectinesterase QRT1 from Arabidopsis thaliana (Mouse-ear cress).